Reading from the N-terminus, the 606-residue chain is NADH-ubiquinone oxidoreductase chain 5 (606 aa).

16 consecutive transmembrane segments (helical) span residues 1–21 (MNLFTSFTLLTLLILTTPIMM), 35–55 (YVKNIVFCAFITSLVPAMVYL), 87–107 (LMFMPVALFITWSIMEFSMWY), 114–134 (INQFFKYLLLFLITMLILVTA), 140–160 (LFIGWEGVGIMSFLLIGWWFG), 171–191 (AILYNRIGDIGLLASMAWFLS), 211–233 (FPLMGLVLAAAGKSAQFGLHPWL), 241–261 (TPVSALLHSSTMVVAGIFLLV), 272–292 (LIQTVTLCLGAITTLFTAICA), 301–320 (IIAFSTSSQLGLMMVTIGLN), 325–347 (AFLHICTHAFFKAMLFLCSGSII), 366–386 (LPFTTTALIIGCLALTGMPFL), 413–433 (LIATSLTAVYSTRIIFFALLG), 457–477 (LLVGSIFAGFILSNSIPPMTT), 482–502 (MPLHLKLTALAMTTLGFIIAF), and 582–602 (GLIKLYFLSFLITITLSMILF).

Belongs to the complex I subunit 5 family. In terms of assembly, core subunit of respiratory chain NADH dehydrogenase (Complex I) which is composed of 45 different subunits.

It localises to the mitochondrion inner membrane. The enzyme catalyses a ubiquinone + NADH + 5 H(+)(in) = a ubiquinol + NAD(+) + 4 H(+)(out). Its function is as follows. Core subunit of the mitochondrial membrane respiratory chain NADH dehydrogenase (Complex I) which catalyzes electron transfer from NADH through the respiratory chain, using ubiquinone as an electron acceptor. Essential for the catalytic activity and assembly of complex I. The chain is NADH-ubiquinone oxidoreductase chain 5 (MT-ND5) from Balaenoptera physalus (Fin whale).